Consider the following 273-residue polypeptide: Tryptophan synthase alpha chain (273 aa).

Residues E49 and D60 each act as proton acceptor in the active site.

This sequence belongs to the TrpA family. Tetramer of two alpha and two beta chains.

The catalysed reaction is (1S,2R)-1-C-(indol-3-yl)glycerol 3-phosphate + L-serine = D-glyceraldehyde 3-phosphate + L-tryptophan + H2O. It functions in the pathway amino-acid biosynthesis; L-tryptophan biosynthesis; L-tryptophan from chorismate: step 5/5. The alpha subunit is responsible for the aldol cleavage of indoleglycerol phosphate to indole and glyceraldehyde 3-phosphate. This chain is Tryptophan synthase alpha chain, found in Halorhodospira halophila (strain DSM 244 / SL1) (Ectothiorhodospira halophila (strain DSM 244 / SL1)).